Reading from the N-terminus, the 386-residue chain is Patatin group M-3 (386 aa).

Positions 1-23 (MATTKSFLILFFMILATTSSTCA) are cleaved as a signal peptide. A PNPLA domain is found at 32-229 (LSIDGGGIKG…TVGDPALLSL (198 aa)). The GXGXXG motif lies at 36 to 41 (GGGIKG). Positions 75–79 (GTSTG) match the GXSXG motif. The active-site Nucleophile is Ser77. Asn115 carries an N-linked (GlcNAc...) asparagine glycan. Asp215 functions as the Proton acceptor in the catalytic mechanism. The DGA/G motif lies at 215–217 (DGG). Residues 321 to 384 (ENALTGTTTE…DRKKLRANKA (64 aa)) are a coiled coil.

The protein belongs to the patatin family. In terms of tissue distribution, tuber.

It localises to the vacuole. Its function is as follows. Probable lipolytic acyl hydrolase (LAH), an activity which is thought to be involved in the response of tubers to pathogens. In Solanum tuberosum (Potato), this protein is Patatin group M-3.